The chain runs to 806 residues: Ribonucleoside-diphosphate reductase large subunit-like protein (806 aa).

This sequence belongs to the ribonucleoside diphosphate reductase large chain family.

The protein localises to the virion. It is found in the host cytoplasm. In terms of biological role, does not possess a ribonucleotide reductase activity. Betaherpesviruses probably use another strategy to expand the dNTP pool in a quiescent host cell. In Human herpesvirus 7 (strain JI) (HHV-7), this protein is Ribonucleoside-diphosphate reductase large subunit-like protein.